A 365-amino-acid polypeptide reads, in one-letter code: Endophilin-B1 (365 aa).

N-acetylmethionine is present on methionine 1. The tract at residues 1 to 30 (MNIMDFNVKKLAADAGTFLSRAVQFTEEKL) is membrane-binding amphipathic helix. The required for membrane binding stretch occupies residues 1-37 (MNIMDFNVKKLAADAGTFLSRAVQFTEEKLGQAEKTE). One can recognise a BAR domain in the interval 27–261 (EEKLGQAEKT…LGSFPSNYLS (235 aa)). Threonine 145 bears the Phosphothreonine; by CDK5 mark. Residues 155–186 (YKTIAKERKLLQNKRLDLDAAKTRLKKAKAAE) are a coiled coil. Positions 305-365 (SNNRKARVLY…VPITYLELLN (61 aa)) constitute an SH3 domain.

Belongs to the endophilin family. Homodimer, and heterodimer with SH3GLB2. Binds BAX; induction of apoptosis augments BAX binding. Binds DNM1, HTT, AMPH, BIN1 and ARFGAP1. Interacts with UVRAG; UVRAG bridges the interaction to BECN1 indicative for an association with the PI3K complex II (PI3KC3-C2). Isoform 3 interacts with PPP1CC; this interaction leads to the inhibition of phosphatase activity. Post-translationally, phosphorylated at Thr-145 by CDK5; this phosphorylation is required for autophagy induction in starved neurons and facilitates homodimerization. In terms of tissue distribution, isoform 1 is widely expressed. Isoform 2 is brain-specific. Isoform 3 is predominantly expressed in testis, but it is also detected in liver and, at much lower levels, in skin, stomach and ovary.

Its subcellular location is the cytoplasm. It localises to the golgi apparatus membrane. The protein resides in the mitochondrion outer membrane. The protein localises to the cytoplasmic vesicle. It is found in the autophagosome membrane. Its subcellular location is the midbody. In terms of biological role, may be required for normal outer mitochondrial membrane dynamics. Required for coatomer-mediated retrograde transport in certain cells. May recruit other proteins to membranes with high curvature. May promote membrane fusion. Involved in activation of caspase-dependent apoptosis by promoting BAX/BAK1 activation. Isoform 1 acts proapoptotic in fibroblasts. Involved in caspase-independent apoptosis during nutrition starvation and involved in the regulation of autophagy. Activates lipid kinase activity of PIK3C3 during autophagy probably by associating with the PI3K complex II (PI3KC3-C2). Associated with PI3KC3-C2 during autophagy may regulate the trafficking of ATG9A from the Golgi complex to the peripheral cytoplasm for the formation of autophagosomes by inducing Golgi membrane tubulation and fragmentation. Involved in regulation of degradative endocytic trafficking and cytokinesis, probably in the context of PI3KC3-C2. Isoform 2 acts antiapoptotic in neuronal cells; involved in maintenance of mitochondrial morphology and promotes neuronal viability. This is Endophilin-B1 (Sh3glb1) from Mus musculus (Mouse).